Reading from the N-terminus, the 269-residue chain is Tryptophan synthase alpha chain (269 aa).

Residues E50 and D61 each act as proton acceptor in the active site.

The protein belongs to the TrpA family. As to quaternary structure, tetramer of two alpha and two beta chains.

It carries out the reaction (1S,2R)-1-C-(indol-3-yl)glycerol 3-phosphate + L-serine = D-glyceraldehyde 3-phosphate + L-tryptophan + H2O. The protein operates within amino-acid biosynthesis; L-tryptophan biosynthesis; L-tryptophan from chorismate: step 5/5. Its function is as follows. The alpha subunit is responsible for the aldol cleavage of indoleglycerol phosphate to indole and glyceraldehyde 3-phosphate. The chain is Tryptophan synthase alpha chain from Buchnera aphidicola subsp. Baizongia pistaciae (strain Bp).